Here is a 410-residue protein sequence, read N- to C-terminus: Chaperone protein dnaJ 15 (410 aa).

In terms of domain architecture, J spans 17–82 (DPYEVLCVSK…EKRRHYDNAG (66 aa)). Residues 284–344 (AKTYEDTTEK…TVDELLKQRD (61 aa)) adopt a coiled-coil conformation. Residues 351–410 (SVVKTPSGNNLSNGSSSKAQGDESKGDGDSAGEEGGTENRDKSKRKWFNLNLKGSDKKLG) are disordered. Positions 357–367 (SGNNLSNGSSS) are enriched in low complexity.

The protein belongs to the DnaJ family. B/II subfamily. Expressed at high levels in root cap, root tip meristematic region and elongation zones, and at lower levels in mature part of roots (at protein level). Constitutively expressed in seedlings, etiolated or not, roots, rosette leaves, cauline leaves, stems, flowers, siliques and pollen.

The protein resides in the cytoplasm. Its subcellular location is the cytoskeleton. The protein localises to the endoplasmic reticulum membrane. It is found in the golgi apparatus membrane. Plays a continuous role in plant development probably in the structural organization of compartments. Seems to be involved in early gravitropic signal transduction within the gravity-perceiving cells (statocytes), where it influences pH changes and auxin distribution. Probably affects the localization and/or activity of auxin efflux carrier components (PIN proteins) or other proteins involved in lateral auxin transport. This is Chaperone protein dnaJ 15 (ATJ15) from Arabidopsis thaliana (Mouse-ear cress).